The following is a 170-amino-acid chain: Peptide deformylase 1 (170 aa).

Fe cation-binding residues include Cys91 and His133. Residue Glu134 is part of the active site. His137 provides a ligand contact to Fe cation.

The protein belongs to the polypeptide deformylase family. The cofactor is Fe(2+).

It carries out the reaction N-terminal N-formyl-L-methionyl-[peptide] + H2O = N-terminal L-methionyl-[peptide] + formate. In terms of biological role, removes the formyl group from the N-terminal Met of newly synthesized proteins. Requires at least a dipeptide for an efficient rate of reaction. N-terminal L-methionine is a prerequisite for activity but the enzyme has broad specificity at other positions. This Vibrio vulnificus (strain CMCP6) protein is Peptide deformylase 1.